The following is a 316-amino-acid chain: Biotin synthase (316 aa).

The Radical SAM core domain occupies 36 to 264 (TEIQISTLLS…ASRVRLAAGR (229 aa)). [4Fe-4S] cluster contacts are provided by Cys-51, Cys-55, and Cys-58. Residues Cys-96, Cys-127, Cys-187, and Arg-259 each contribute to the [2Fe-2S] cluster site.

This sequence belongs to the radical SAM superfamily. Biotin synthase family. In terms of assembly, homodimer. [4Fe-4S] cluster serves as cofactor. Requires [2Fe-2S] cluster as cofactor.

It carries out the reaction (4R,5S)-dethiobiotin + (sulfur carrier)-SH + 2 reduced [2Fe-2S]-[ferredoxin] + 2 S-adenosyl-L-methionine = (sulfur carrier)-H + biotin + 2 5'-deoxyadenosine + 2 L-methionine + 2 oxidized [2Fe-2S]-[ferredoxin]. It participates in cofactor biosynthesis; biotin biosynthesis; biotin from 7,8-diaminononanoate: step 2/2. Functionally, catalyzes the conversion of dethiobiotin (DTB) to biotin by the insertion of a sulfur atom into dethiobiotin via a radical-based mechanism. The protein is Biotin synthase of Gluconacetobacter diazotrophicus (strain ATCC 49037 / DSM 5601 / CCUG 37298 / CIP 103539 / LMG 7603 / PAl5).